Reading from the N-terminus, the 312-residue chain is MTKIIFMGTPAFSVPVLEQLASAYDVIAVVTQPDRPVGRKRILTPPPVKKAALELGIPVYQPEKLRTSSELEELISLEADLLVTAAYGQILPNTLLESPKHGAINVHASLLPEYRGGAPVHYALLDGKTETGVTIMYMVEKLDAGDMISQRKIPITEEDNTGTMFDKLSKLGAELLMDTLPDFLAGKITAVAQDPEKVTFARNISREQEKINWTKPGRTIFNQIRGLSPWPVAYTTLEEKPFKIWEATFEDTKTSGEPGTILTDKSTLKIVAGDGTLIVPTVIQPAGKPKMDIHSFMSGAGRNLSKTTRFGE.

(6S)-5,6,7,8-tetrahydrofolate is bound at residue S109–P112.

It belongs to the Fmt family.

The enzyme catalyses L-methionyl-tRNA(fMet) + (6R)-10-formyltetrahydrofolate = N-formyl-L-methionyl-tRNA(fMet) + (6S)-5,6,7,8-tetrahydrofolate + H(+). Functionally, attaches a formyl group to the free amino group of methionyl-tRNA(fMet). The formyl group appears to play a dual role in the initiator identity of N-formylmethionyl-tRNA by promoting its recognition by IF2 and preventing the misappropriation of this tRNA by the elongation apparatus. This is Methionyl-tRNA formyltransferase from Listeria innocua serovar 6a (strain ATCC BAA-680 / CLIP 11262).